The following is a 2710-amino-acid chain: MANFSSHIQELRELIAASSTTTSTSAPASVHFEVKLREVLPNLLRDYVVPSSPTADGREATAVLKLLSYTAGKFPGVFFHGRAADVIRVIGRVLPFFAEPNFRSRHEIIFDTVWSLLSLLRTGDREAYRQFFLDVMVAVQDVLYVVASMHGDRPSGVLTERYLVKCLCGSFSDILDSPGIFSDLPDSCQPKNGPGVLVDLTGETRWRPFATMLIKLVNKCLADGTLYVEGLVNMPFVSAACSIICYGDESLHKVCFDFARIVATVITVEILPVENIIRSIMCILSQDVNGLSDIRDADYDFSMGACLHALHSSCPGYIVAITASDIVNVFQRAVHTSRSSELQVAMCNAYKRIVELCSPRVWKPEILLKLLCLPKPCAKLIECIRLVVDKSGQSFLSSDDRDDGSSLLAKSEGLDLPKVGQKRIALDEENSFPKRLKMTEPRFSSGSFMVDELSAGVGQELEKDHGCDFRVQLYSLINCLSPDNHMAYPLEPAISIQVLSLLCLSLSVYPKTNLFSRISKQVLSWIPWICKQTTKICMFSFDVSLYFEAVQTVMLLQSFLPGHTKLFEDEPLLIGNGCTDFEYPRYADLINLLKLVSDDGYLTSQTCSEKLKCLAVQIIAKIGSRQNAECDLQVLELAIQSETGELQNEALMSLPIIVLYSGPRMLGAMFRKLETIGTLGCKKLWKSIAISLGFLSCLNGTTDCTDKVGNHCKLFLAKHCEQPILTLNLLRGFWCPQCDVRTVHIEDQVPIVDIALSEDKNIDFKINMFKAHSLFFKFLYAETSEECIVSIVEVLPRILKHSSRDVLLDMKFQWVQCVDFLLLHEMKAVRDAFSSVVSCFLETNAMDILFSDGTGMSGGTSRVKFMDKIKSAFTEAEDPQILLTLLESTAAIVKASDIHGEVFFCSFVLLIGQLGNHDYIVRVTALRLLQRCCTYCFKGGLELFLSKYFHVRDNLYDYLSSRLLTHPVVISEFAESVLGVKTEELIRRMVPSIIPKLIVSHQNNDQAVVTLNELASHLNSELVPLIVNSLPKVLSFALFYEDGQHLSSVLQFYHTETGTDSKEIFSAALPTLLDEIICFPGESDQIETDRRMAKISPTIQNIARILTGNDNLPEFLKNDFVRLLNSIDKKMLHSSDVNLQKQALQRIRKLVEMMGPYLSTHAPKIMVLLIFAIDKETLQMDGLDVLHFFIKRLAEVSCTSIKYVMSQVVAAFIPSLERCRERPLVHLGKIVEILEELVVKNIILLKQHIRELPLLPSLPSLSGVNKVIQEARGLMTLQDHLKDAVNGLNHESLNVRYMVACELNKLFNDRRGDITSLIIGEDIADLDIISSLIMSLLKGCAEESRTVVGQRLKLVCADCLGALGAVDPAKFKVMSCERFKIECSDDDLIFELIHKHLARAFRAASDTTVQDSAALAIQELLKLSGCQSLPNESSSCKMSKRGQKLWGRFSSYVKEIIAPCLTSRFHLPSVNDATLAGPIYRPTMSFRRWIYYWIRKLTSHATGSRSGIFGACRGIVRHDMPTAIYLLPYLVLNVVCYGTPEARQSITEEILSVLNAAASESSGAIVHGITGGQSEVCIQAVFTLLDNLGQWVDDLKQEIALSQSNYAMAGRQGGKLRDESNSMYDQDQLLVQCSNVAELLAAIPKVTLAKASFRCQAHARALMYFESHVREKSGSSNPAADCSGAFSDDDISFLMEIYGGLDEPDGLLGLANLRKSSTLQDQLIINEKAGNWAEVLTLCEQSLQMEPDSVHRHCDVLNCLLNMCHLQAMIAHVDGLVYRIPQSKKTWCMQGVQAAWRLGRWDLMDEYLAEADKGLVCRSSENNASFDMGLAKIFNAMMKKDQFMVAEKIAQSKQALLVPLAAAGMDSYMRAYPYIVKLHMLRELEDFNSLLGDESFLEKPFAADDPKFLKLTKDWENRLRCTQPSLWAREPLLAFRRMVYNLSHMNAQAGNCWLQYARLCRLAGHYETAHRAILEADASGAPNAHMEKAKYLWNIRKSDSAIAELQQTLLNMPADVLGPTVLSSLSSLSLALPNAPLSVTQASKENPDVSKTLLLYTRWIHYTGQKQSNDIKSLYSRVADLRPKWEKGFFCIAKFYDDLLVDARRRQEDKKIASGVGPVPPSSTGSLTTATEEKPWWDMLPVVLIQYARGLHRGHKNLFQALPRLLTLWFEFGSIYIQDGSSFNKPMKEVHIRLLGIMRGCLKDLPPYQWLTVLSQLISRICHQNIEVVKLVKCIVTSILREYPQQALWMMAAVSKSTVAARRDAAAEILQSAKKGSRRGSDSNALFMQFPSLIDHLIKLCFHPGQPKARAINISTEFSSLKRMMPLGIILPIQQALTVTLPSYDTNMTDQSTFRPFSVSEHPTIAGIADDAEILNSLQKPKKVVFIGSDGISRPFLCKPKDDLRKDSRMMEFNAMINRLLSKVPESRRRKLYIRTFAVVPLTEDCGMVEWVPNTRGLRQILQDIYITCGKFDRMKTNPQIKKIYDQLQGKMPEEMLKAKILPMFPPVFHKWFLTTFSEPAAWIRARAAYAHTTAVWSMVGHIVGLGDRHGENILLDSTTGDCIHVDFSCLFDKGLLLEKPEVVPFRFTQNMVDGLGITGYEGVFVKVCEITLSVLRTHKEALMTVLETFIHDPLVEWTKSHKSSGVEVRNPHAQRAISNITERLQGVVVGVNAAPSLPLSVEGQARRLIAEAVSHSNLGKMYVWWMAWF.

One can recognise an FAT domain in the interval 1647 to 2257 (TLAKASFRCQ…LWMMAAVSKS (611 aa)). In terms of domain architecture, PI3K/PI4K catalytic spans 2368 to 2680 (IADDAEILNS…GVNAAPSLPL (313 aa)). The segment at 2374 to 2380 (ILNSLQK) is G-loop. The tract at residues 2545–2553 (GLGDRHGEN) is catalytic loop. The segment at 2565–2589 (HVDFSCLFDKGLLLEKPEVVPFRFT) is activation loop. In terms of domain architecture, FATC spans 2678–2710 (LPLSVEGQARRLIAEAVSHSNLGKMYVWWMAWF).

It belongs to the PI3/PI4-kinase family. ATM subfamily.

It is found in the nucleus. The enzyme catalyses L-seryl-[protein] + ATP = O-phospho-L-seryl-[protein] + ADP + H(+). It carries out the reaction L-threonyl-[protein] + ATP = O-phospho-L-threonyl-[protein] + ADP + H(+). Its function is as follows. Probable serine/threonine kinase. Seems to play a central role in cell-cycle regulation by transmitting DNA damage signals to downstream effectors of cell-cycle progression. May recognize the substrate consensus sequence [ST]-Q and phosphorylate histone variant H2AX to form H2AXS139ph at sites of DNA damage, thereby regulating DNA damage response mechanism. In Oryza sativa subsp. japonica (Rice), this protein is Serine/threonine-protein kinase ATR.